We begin with the raw amino-acid sequence, 275 residues long: Large ribosomal subunit protein uL2 (275 aa).

The tract at residues 236–263 (EGRGKGQHPVTPWGMPTKGYKTRRGRRA) is disordered.

It belongs to the universal ribosomal protein uL2 family. Part of the 50S ribosomal subunit. Forms a bridge to the 30S subunit in the 70S ribosome.

Functionally, one of the primary rRNA binding proteins. Required for association of the 30S and 50S subunits to form the 70S ribosome, for tRNA binding and peptide bond formation. It has been suggested to have peptidyltransferase activity; this is somewhat controversial. Makes several contacts with the 16S rRNA in the 70S ribosome. The chain is Large ribosomal subunit protein uL2 from Pseudothermotoga lettingae (strain ATCC BAA-301 / DSM 14385 / NBRC 107922 / TMO) (Thermotoga lettingae).